Consider the following 214-residue polypeptide: Probable GTP-binding protein EngB (214 aa).

The region spanning 22-194 is the EngB-type G domain; it reads HLPEIAFAGR…WARIDALLEP (173 aa). GTP contacts are provided by residues 30 to 37, 57 to 61, 75 to 78, 142 to 145, and 173 to 175; these read GRSNVGKS, GRTQL, DLPG, TKCD, and FSA. Mg(2+) contacts are provided by serine 37 and threonine 59. The tract at residues 195–214 is disordered; that stretch reads TAAETPGIPEEPAPPGPVND. Positions 203–214 are enriched in pro residues; the sequence is PEEPAPPGPVND.

This sequence belongs to the TRAFAC class TrmE-Era-EngA-EngB-Septin-like GTPase superfamily. EngB GTPase family. Mg(2+) serves as cofactor.

In terms of biological role, necessary for normal cell division and for the maintenance of normal septation. The chain is Probable GTP-binding protein EngB from Geobacter sp. (strain M21).